Consider the following 871-residue polypeptide: Zinc finger protein 473 (871 aa).

Residues 6–75 enclose the KRAB domain; the sequence is VTLKDVGMDF…AGGSPEATSP (70 aa). 2 disordered regions span residues 47-81 and 140-164; these read PPRP…TETK and NGES…TVST. Over residues 71–81 the composition is skewed to polar residues; that stretch reads EATSPDVTETK. The segment covering 145-154 has biased composition (basic and acidic residues); that stretch reads TECKSHELKR. Lys-148 participates in a covalent cross-link: Glycyl lysine isopeptide (Lys-Gly) (interchain with G-Cter in SUMO2). The C2H2-type 1 zinc-finger motif lies at 209–231; sequence YQCSECGKSFSGSYRLTQHWITH. A C2H2-type 2; degenerate zinc finger spans residues 265–286; that stretch reads YVCNEYGTTFSQSTYLWHQKTH. The segment covering 290-317 has biased composition (basic and acidic residues); sequence KPCKSQDSDHPPSHDTQPGEHQKTHTDS. Residues 290–318 are disordered; it reads KPCKSQDSDHPPSHDTQPGEHQKTHTDSK. Positions 312–552 are interaction with SLBP/pre-mRNA complex; the sequence is KTHTDSKSYN…GFFVSGKILD (241 aa). C2H2-type zinc fingers lie at residues 320 to 342, 347 to 369, and 375 to 397; these read YNCN…QKIH, YECS…QKTH, and SECQ…QALH. The segment at 403–425 adopts a C2H2-type 6; degenerate zinc-finger fold; it reads YKCNERGKSFRHNSTLKIHQRVH. Lys-419 is covalently cross-linked (Glycyl lysine isopeptide (Lys-Gly) (interchain with G-Cter in SUMO2)). 4 consecutive C2H2-type zinc fingers follow at residues 431 to 453, 459 to 481, 487 to 509, and 515 to 537; these read YKCS…RRIH, HKCQ…QAIH, YSCA…QKMH, and YECQ…ESVH. Residues Lys-549 and Lys-558 each participate in a glycyl lysine isopeptide (Lys-Gly) (interchain with G-Cter in SUMO2) cross-link. 2 C2H2-type zinc fingers span residues 562 to 584 and 591 to 613; these read FKCN…ERIH and FECD…QRIH. Residue Lys-635 forms a Glycyl lysine isopeptide (Lys-Gly) (interchain with G-Cter in SUMO2) linkage. 8 consecutive C2H2-type zinc fingers follow at residues 646 to 668, 674 to 696, 702 to 724, 730 to 752, 758 to 780, 786 to 808, 814 to 836, and 842 to 864; these read FKCN…QLIH, FKCS…ERTH, LVCN…QRIH, YVCD…QRIH, YVCQ…RRVH, YRCG…QRIH, YSCN…LRVH, and YQCQ…QRVH.

It belongs to the krueppel C2H2-type zinc-finger protein family. As to quaternary structure, interacts with the SLBP/pre-mRNA complex but not with SLBP alone. Interacts with LSM11 in a U7 snRNP-dependent manner.

It localises to the nucleus. Functionally, involved in histone 3'-end pre-mRNA processing by associating with U7 snRNP and interacting with SLBP/pre-mRNA complex. Increases histone 3'-end pre-mRNA processing but has no effect on U7 snRNP levels, when overexpressed. Required for cell cycle progression from G1 to S phases. In Homo sapiens (Human), this protein is Zinc finger protein 473 (ZNF473).